A 187-amino-acid chain; its full sequence is Cytochrome b-245 chaperone 1 (187 aa).

A helical transmembrane segment spans residues 20-42 (GIRSWSLLVGILSTGLAAAYYSG). Residues 167–187 (ESPSERSQSSDSEPDGPGGQS) form a disordered region. 2 positions are modified to phosphoserine: Ser-168 and Ser-170.

The protein belongs to the CYBC1 family. Interacts with CYBB; CYBC1 may act as a chaperone stabilizing Cytochrome b-245 heterodimer.

The protein resides in the endoplasmic reticulum membrane. Its function is as follows. Functions as a chaperone necessary for a stable expression of the CYBA and CYBB subunits of the cytochrome b-245 heterodimer. Controls the phagocyte respiratory burst and is essential for innate immunity. This is Cytochrome b-245 chaperone 1 from Rattus norvegicus (Rat).